The chain runs to 457 residues: Oxysterol-binding protein-related protein 3C (457 aa).

Disordered stretches follow at residues 37 to 61 and 363 to 393; these read NEGVEVINPEGGKEDAEEEAQKGRW and QGDLSKAGSEKHSLEERQRAEKRTRETKGQK. Basic and acidic residues-rich tracts occupy residues 47–61 and 370–391; these read GGKEDAEEEAQKGRW and GSEKHSLEERQRAEKRTRETKG.

Belongs to the OSBP family. As to expression, expressed in roots, leaves, stems and flowers.

Its function is as follows. May be involved in the transport of sterols. This chain is Oxysterol-binding protein-related protein 3C (ORP3C), found in Arabidopsis thaliana (Mouse-ear cress).